Reading from the N-terminus, the 151-residue chain is Phosphopantetheine adenylyltransferase (151 aa).

Substrate is bound at residue S9. ATP-binding positions include 9–10 and H17; that span reads SF. Residues K41, T73, and R87 each contribute to the substrate site. ATP is bound by residues 88 to 90, E98, and 122 to 128; these read GLR and TSFISSS.

The protein belongs to the bacterial CoaD family. In terms of assembly, homohexamer. The cofactor is Mg(2+).

Its subcellular location is the cytoplasm. The enzyme catalyses (R)-4'-phosphopantetheine + ATP + H(+) = 3'-dephospho-CoA + diphosphate. It participates in cofactor biosynthesis; coenzyme A biosynthesis; CoA from (R)-pantothenate: step 4/5. Its function is as follows. Reversibly transfers an adenylyl group from ATP to 4'-phosphopantetheine, yielding dephospho-CoA (dPCoA) and pyrophosphate. The protein is Phosphopantetheine adenylyltransferase of Flavobacterium psychrophilum (strain ATCC 49511 / DSM 21280 / CIP 103535 / JIP02/86).